Consider the following 262-residue polypeptide: Phosphonates import ATP-binding protein PhnC (262 aa).

The ABC transporter domain occupies 5-253; the sequence is IRVEKLAKTF…RFDHLYRSIN (249 aa). Residue 37–44 coordinates ATP; the sequence is GPSGSGKS.

The protein belongs to the ABC transporter superfamily. Phosphonates importer (TC 3.A.1.9.1) family. The complex is composed of two ATP-binding proteins (PhnC), two transmembrane proteins (PhnE) and a solute-binding protein (PhnD).

It is found in the cell inner membrane. The catalysed reaction is phosphonate(out) + ATP + H2O = phosphonate(in) + ADP + phosphate + H(+). Its function is as follows. Part of the ABC transporter complex PhnCDE involved in phosphonates import. Responsible for energy coupling to the transport system. This chain is Phosphonates import ATP-binding protein PhnC, found in Escherichia coli (strain UTI89 / UPEC).